The chain runs to 241 residues: Adenosine 5'-phosphosulfate reductase (241 aa).

Residues Cys122, Cys123, Cys205, and Cys208 each contribute to the [4Fe-4S] cluster site. Catalysis depends on Cys231, which acts as the Nucleophile; cysteine thiosulfonate intermediate.

The protein belongs to the PAPS reductase family. CysH subfamily. [4Fe-4S] cluster is required as a cofactor.

It is found in the cytoplasm. It catalyses the reaction [thioredoxin]-disulfide + sulfite + AMP + 2 H(+) = adenosine 5'-phosphosulfate + [thioredoxin]-dithiol. It participates in sulfur metabolism; hydrogen sulfide biosynthesis; sulfite from sulfate. In terms of biological role, catalyzes the formation of sulfite from adenosine 5'-phosphosulfate (APS) using thioredoxin as an electron donor. In Shouchella clausii (strain KSM-K16) (Alkalihalobacillus clausii), this protein is Adenosine 5'-phosphosulfate reductase.